The sequence spans 369 residues: Dihydroorotate dehydrogenase (quinone) (369 aa).

Residues 76–80 (AGLDK) and T100 each bind FMN. K80 lines the substrate pocket. 125-129 (NRMGF) lines the substrate pocket. FMN contacts are provided by N154 and N187. N187 is a binding site for substrate. The active-site Nucleophile is S190. N192 serves as a coordination point for substrate. FMN-binding residues include K232 and S260. 261 to 262 (NT) contributes to the substrate binding site. FMN is bound by residues G282, G311, and 332-333 (YS).

The protein belongs to the dihydroorotate dehydrogenase family. Type 2 subfamily. As to quaternary structure, monomer. FMN is required as a cofactor.

The protein localises to the cell membrane. It carries out the reaction (S)-dihydroorotate + a quinone = orotate + a quinol. The protein operates within pyrimidine metabolism; UMP biosynthesis via de novo pathway; orotate from (S)-dihydroorotate (quinone route): step 1/1. Catalyzes the conversion of dihydroorotate to orotate with quinone as electron acceptor. The chain is Dihydroorotate dehydrogenase (quinone) (pyrD) from Deinococcus radiodurans (strain ATCC 13939 / DSM 20539 / JCM 16871 / CCUG 27074 / LMG 4051 / NBRC 15346 / NCIMB 9279 / VKM B-1422 / R1).